A 396-amino-acid chain; its full sequence is Elongation factor Tu (396 aa).

In terms of domain architecture, tr-type G spans 10–205 (KPHVNIGTIG…ACDDNIPDPV (196 aa)). A G1 region spans residues 19-26 (GHVDHGKT). Position 19-26 (19-26 (GHVDHGKT)) interacts with GTP. Mg(2+) is bound at residue threonine 26. A G2 region spans residues 62–66 (GITIN). Residues 83–86 (DAPG) are G3. GTP is bound by residues 83–87 (DAPGH) and 138–141 (NKCD). Residues 138 to 141 (NKCD) are G4. A G5 region spans residues 175–177 (SAL).

It belongs to the TRAFAC class translation factor GTPase superfamily. Classic translation factor GTPase family. EF-Tu/EF-1A subfamily. Monomer.

Its subcellular location is the cytoplasm. The catalysed reaction is GTP + H2O = GDP + phosphate + H(+). In terms of biological role, GTP hydrolase that promotes the GTP-dependent binding of aminoacyl-tRNA to the A-site of ribosomes during protein biosynthesis. This Corynebacterium glutamicum (strain ATCC 13032 / DSM 20300 / JCM 1318 / BCRC 11384 / CCUG 27702 / LMG 3730 / NBRC 12168 / NCIMB 10025 / NRRL B-2784 / 534) protein is Elongation factor Tu.